Consider the following 247-residue polypeptide: 4-hydroxy-tetrahydrodipicolinate reductase (247 aa).

NAD(+) is bound by residues 9–14 (GAAGRM), 76–78 (GTT), and 103–106 (APNF). The active-site Proton donor/acceptor is His-133. His-134 serves as a coordination point for (S)-2,3,4,5-tetrahydrodipicolinate. The Proton donor role is filled by Lys-137. 143-144 (GT) contacts (S)-2,3,4,5-tetrahydrodipicolinate.

Belongs to the DapB family.

Its subcellular location is the cytoplasm. It carries out the reaction (S)-2,3,4,5-tetrahydrodipicolinate + NAD(+) + H2O = (2S,4S)-4-hydroxy-2,3,4,5-tetrahydrodipicolinate + NADH + H(+). The enzyme catalyses (S)-2,3,4,5-tetrahydrodipicolinate + NADP(+) + H2O = (2S,4S)-4-hydroxy-2,3,4,5-tetrahydrodipicolinate + NADPH + H(+). It functions in the pathway amino-acid biosynthesis; L-lysine biosynthesis via DAP pathway; (S)-tetrahydrodipicolinate from L-aspartate: step 4/4. Functionally, catalyzes the conversion of 4-hydroxy-tetrahydrodipicolinate (HTPA) to tetrahydrodipicolinate. The chain is 4-hydroxy-tetrahydrodipicolinate reductase from Beutenbergia cavernae (strain ATCC BAA-8 / DSM 12333 / CCUG 43141 / JCM 11478 / NBRC 16432 / NCIMB 13614 / HKI 0122).